A 201-amino-acid polypeptide reads, in one-letter code: FMN-dependent NADH:quinone oxidoreductase (201 aa).

FMN-binding positions include S9, S16 to S18, and M93 to F96.

It belongs to the azoreductase type 1 family. As to quaternary structure, homodimer. FMN serves as cofactor.

It carries out the reaction 2 a quinone + NADH + H(+) = 2 a 1,4-benzosemiquinone + NAD(+). It catalyses the reaction N,N-dimethyl-1,4-phenylenediamine + anthranilate + 2 NAD(+) = 2-(4-dimethylaminophenyl)diazenylbenzoate + 2 NADH + 2 H(+). Functionally, quinone reductase that provides resistance to thiol-specific stress caused by electrophilic quinones. Its function is as follows. Also exhibits azoreductase activity. Catalyzes the reductive cleavage of the azo bond in aromatic azo compounds to the corresponding amines. This Gluconacetobacter diazotrophicus (strain ATCC 49037 / DSM 5601 / CCUG 37298 / CIP 103539 / LMG 7603 / PAl5) protein is FMN-dependent NADH:quinone oxidoreductase.